The following is a 463-amino-acid chain: Chromosomal replication initiator protein DnaA (463 aa).

The domain I, interacts with DnaA modulators stretch occupies residues 1 to 84; sequence MNTNQIILTN…QLFQHYNNAI (84 aa). The interval 84–124 is domain II; that stretch reads IKTVEIITKELPASNQATLELPTKTFADIGSSELNSENIFS. Residues 125–343 form a domain III, AAA+ region region; it reads TFDIRFTFDN…GALNKVIAHS (219 aa). ATP contacts are provided by Gly171, Gly173, Lys174, and Thr175. The tract at residues 344-463 is domain IV, binds dsDNA; that stretch reads NFTAKEITLE…INLMMKILQN (120 aa).

The protein belongs to the DnaA family. Oligomerizes as a right-handed, spiral filament on DNA at oriC.

The protein resides in the cytoplasm. In terms of biological role, plays an essential role in the initiation and regulation of chromosomal replication. ATP-DnaA binds to the origin of replication (oriC) to initiate formation of the DNA replication initiation complex once per cell cycle. Binds the DnaA box (a 9 base pair repeat at the origin) and separates the double-stranded (ds)DNA. Forms a right-handed helical filament on oriC DNA; dsDNA binds to the exterior of the filament while single-stranded (ss)DNA is stabiized in the filament's interior. The ATP-DnaA-oriC complex binds and stabilizes one strand of the AT-rich DNA unwinding element (DUE), permitting loading of DNA polymerase. After initiation quickly degrades to an ADP-DnaA complex that is not apt for DNA replication. Binds acidic phospholipids. This Rickettsia bellii (strain OSU 85-389) protein is Chromosomal replication initiator protein DnaA.